Consider the following 421-residue polypeptide: Trimethyllysine dioxygenase, mitochondrial (421 aa).

A mitochondrion-targeting transit peptide spans 1 to 15; sequence MWYHKLLHQQSRLQN. An N6-acetyllysine mark is found at K179 and K236. The Fe cation site is built by H242, D244, and H389.

It belongs to the gamma-BBH/TMLD family. Homodimer. Fe(2+) is required as a cofactor. L-ascorbate serves as cofactor.

Its subcellular location is the mitochondrion matrix. The enzyme catalyses N(6),N(6),N(6)-trimethyl-L-lysine + 2-oxoglutarate + O2 = (3S)-3-hydroxy-N(6),N(6),N(6)-trimethyl-L-lysine + succinate + CO2. It participates in amine and polyamine biosynthesis; carnitine biosynthesis. In terms of biological role, converts trimethyllysine (TML) into hydroxytrimethyllysine (HTML). This Rattus norvegicus (Rat) protein is Trimethyllysine dioxygenase, mitochondrial (Tmlhe).